Consider the following 302-residue polypeptide: Ubiquinone biosynthesis protein COQ4, mitochondrial (302 aa).

Residues 1-19 (MNSSPARAVRALVQSQSRQ) constitute a mitochondrion transit peptide. Residues histidine 176, aspartate 177, histidine 180, and glutamate 192 each coordinate Zn(2+). The segment covering 268–282 (PPPDMRDARKRERDA) has biased composition (basic and acidic residues). The interval 268-302 (PPPDMRDARKRERDARRRRKQLETEAQQGLDAASL) is disordered.

It belongs to the COQ4 family. In terms of assembly, component of a multi-subunit COQ enzyme complex, composed of at least COQ3, COQ4, COQ5, COQ6, COQ7 and COQ9. Zn(2+) is required as a cofactor.

Its subcellular location is the mitochondrion inner membrane. The catalysed reaction is a 4-hydroxy-3-methoxy-5-(all-trans-polyprenyl)benzoate + H(+) = a 2-methoxy-6-(all-trans-polyprenyl)phenol + CO2. It participates in cofactor biosynthesis; ubiquinone biosynthesis. Lyase that catalyzes the C1-decarboxylation of 4-hydroxy-3-methoxy-5-(all-trans-polyprenyl)benzoic acid into 2-methoxy-6-(all-trans-polyprenyl)phenol during ubiquinone biosynthesis. In Pyricularia oryzae (strain 70-15 / ATCC MYA-4617 / FGSC 8958) (Rice blast fungus), this protein is Ubiquinone biosynthesis protein COQ4, mitochondrial.